Reading from the N-terminus, the 281-residue chain is Streptomycin biosynthesis protein StrF (281 aa).

The protein operates within antibiotic biosynthesis; streptomycin biosynthesis. Its function is as follows. May be involved in the formation of N-methyl-L-glucosamine. This chain is Streptomycin biosynthesis protein StrF (strF), found in Streptomyces griseus.